Here is a 367-residue protein sequence, read N- to C-terminus: CCN family member 4 (367 aa).

Positions Met1–Ala22 are cleaved as a signal peptide. Residues Arg45–Val118 form the IGFBP N-terminal domain. Disulfide bonds link Cys49/Cys73, Cys53/Cys75, Cys55/Cys76, and Cys62/Cys79. Asn86 carries an N-linked (GlcNAc...) asparagine glycan. 2 disulfides stabilise this stretch: Cys87/Cys101 and Cys93/Cys115. Positions Val121–Asp186 constitute a VWFC domain. N-linked (GlcNAc...) asparagine glycosylation occurs at Asn143. The TSP type-1 domain occupies Asn215 to Asp260. 5 disulfides stabilise this stretch: Cys273-Cys310, Cys290-Cys324, Cys301-Cys340, Cys304-Cys342, and Cys309-Cys346. A CTCK domain is found at Cys273 to Arg347. Asn284 is a glycosylation site (N-linked (GlcNAc...) asparagine). N-linked (GlcNAc...) asparagine glycosylation occurs at Asn343.

The protein belongs to the CCN family.

The protein resides in the secreted. Its function is as follows. Downstream regulator in the Wnt/Frizzled-signaling pathway. Associated with cell survival. Adheres to skin and melanoma fibroblasts. In vitro binding to skin fibroblasts occurs through the proteoglycans, decorin and biglycan. The chain is CCN family member 4 (Ccn4) from Rattus norvegicus (Rat).